Reading from the N-terminus, the 136-residue chain is Late embryogenesis abundant protein D-7 (136 aa).

Disordered stretches follow at residues 1 to 108 (MASH…AQGA) and 117 to 136 (GMADADEDEHNYPATVTRKD). Positions 11 to 58 (GRAEGRAHEKGEQMKESMKEKAEAAKQKTMETAEAAKQKTMETAEAAK) are enriched in basic and acidic residues. 5 LEA 11-mer repeat repeats span residues 31-41 (KAEAAKQKTME), 42-52 (TAEAAKQKTME), 53-63 (TAEAAKQKTRG), 64-74 (AAETTNDKTKQ), and 75-85 (TAGAARGKAEE).

This sequence belongs to the LEA type 4 family.

Functionally, LEA proteins are late embryonic proteins abundant in higher plant seed embryos. There are two subsets of LEA proteins (5a and 5b), the first ones are expressed when the cotyledon weight reach 80 mg and the second set are expressed above 100 mg. The function of those proteins is not known. The polypeptide is Late embryogenesis abundant protein D-7 (Gossypium hirsutum (Upland cotton)).